The sequence spans 171 residues: MPLLDSFTVDHTRMEAPAVRVAKTMNTPHGDAITVFDLRFCVPNKEVMPERGIHTLEHLFAGFMRNHLNGNGVEIIDISPMGCRTGFYMSLIGTPDEQRVADVWKAAMEDVLKVQDQNQIPELNVYQCGTYQMHSLQEAQDIARSILERDVRINSNEELALPKEKLQELHI.

Fe cation contacts are provided by His54, His58, and Cys128.

This sequence belongs to the LuxS family. In terms of assembly, homodimer. Requires Fe cation as cofactor.

The enzyme catalyses S-(5-deoxy-D-ribos-5-yl)-L-homocysteine = (S)-4,5-dihydroxypentane-2,3-dione + L-homocysteine. Involved in the synthesis of autoinducer 2 (AI-2) which is secreted by bacteria and is used to communicate both the cell density and the metabolic potential of the environment. The regulation of gene expression in response to changes in cell density is called quorum sensing. Catalyzes the transformation of S-ribosylhomocysteine (RHC) to homocysteine (HC) and 4,5-dihydroxy-2,3-pentadione (DPD). The protein is S-ribosylhomocysteine lyase of Escherichia coli O157:H7.